Consider the following 90-residue polypeptide: RNA-binding protein Hfq (90 aa).

Residues 11–71 enclose the Sm domain; it reads DVFLNSVRKT…ISTIMPAAPV (61 aa).

Belongs to the Hfq family. In terms of assembly, homohexamer.

RNA chaperone that binds small regulatory RNA (sRNAs) and mRNAs to facilitate mRNA translational regulation in response to envelope stress, environmental stress and changes in metabolite concentrations. Also binds with high specificity to tRNAs. The chain is RNA-binding protein Hfq from Maricaulis maris (strain MCS10) (Caulobacter maris).